The chain runs to 391 residues: Superoxide dismutase [Fe] 1, chloroplastic (391 aa).

The N-terminal 73 residues, 1–73, are a transit peptide targeting the chloroplast; that stretch reads MAFATLVGVG…GESTNSRVLQ (73 aa). Residues 87–119 show a composition bias toward acidic residues; sequence VNDGIDDETASDAEMDEDAEANGDESSGTDEDA. Positions 87 to 120 are disordered; it reads VNDGIDDETASDAEMDEDAEANGDESSGTDEDAS. Positions 148, 202, 301, and 305 each coordinate Fe cation. The disordered stretch occupies residues 370–391; that stretch reads MPQQVNGDAREQTSGQEKSLGV. The segment covering 381-391 has biased composition (polar residues); it reads QTSGQEKSLGV.

Belongs to the iron/manganese superoxide dismutase family. In terms of assembly, homodimer. It depends on Fe cation as a cofactor.

The protein resides in the plastid. It localises to the chloroplast. The enzyme catalyses 2 superoxide + 2 H(+) = H2O2 + O2. Its function is as follows. Destroys superoxide anion radicals which are normally produced within the cells and which are toxic to biological systems. The protein is Superoxide dismutase [Fe] 1, chloroplastic of Oryza sativa subsp. japonica (Rice).